Reading from the N-terminus, the 476-residue chain is Protein transport protein SEC61 subunit alpha (476 aa).

Residues 1–33 (MSSLRFLDLVKPFVPFLPEVQQPETKIPFNQKL) are Cytoplasmic-facing. A helical membrane pass occupies residues 34–54 (MWTGLTLLIFLVMSQMPLYGI). Topologically, residues 55–76 (VSSDTSDPLYWLRMMMASNRGT) are lumenal. Residues 77-97 (LMELGITPIISSGMVFQLLAG) traverse the membrane as a helical segment. The Cytoplasmic segment spans residues 98–119 (THMIDVNLDLKADRELYQTAQK). Residues 120 to 140 (LFAVILSIGTATVYVFTGLYG) form a helical membrane-spanning segment. The Lumenal portion of the chain corresponds to 141–146 (PPSDLG). A helical transmembrane segment spans residues 147-167 (AGIVFLLILQLVVAGMIVILL). At 168–246 (DELLQKGYGL…YRQNLPNIMN (79 aa)) the chain is on the cytoplasmic side. A helical membrane pass occupies residues 247–267 (LLATLVVFAAVIYLQGFRVEI). At 268 to 361 (PVKSSRQRGA…KDALLDPIHT (94 aa)) the chain is on the lumenal side. A helical transmembrane segment spans residues 362-382 (AVYIAYMLTACAVFSKTWIEV). Residues 383–415 (SGSSPRDVAKQLKDQGLVMAGHREQSMYKELKR) lie on the Cytoplasmic side of the membrane. The chain crosses the membrane as a helical span at residues 416–434 (IIPTAAAFGGACIGALSVA). Residues 435–440 (SDLMGA) are Lumenal-facing. The helical transmembrane segment at 441–458 (LGSGTGTLLAVTIIYGYF) threads the bilayer. Residues 459-476 (EIAAKEGDLQGMKGMIMG) lie on the Cytoplasmic side of the membrane.

This sequence belongs to the SecY/SEC61-alpha family. In terms of assembly, heterotrimeric complex composed of SEC61-alpha, SEC61-beta and SEC61-gamma.

The protein resides in the endoplasmic reticulum membrane. Appears to play a crucial role in the insertion of secretory and membrane polypeptides into the ER. It is required for assembly of membrane and secretory proteins and is essential for cell growth. It interacts with other membrane proteins required for protein translocation. Upon binding to SEC62/63 complex, secretory precursor polypeptides may engage SEC61 to begin membrane penetration event. A cycle of assembly and disassembly of SEC62/63 from SEC61 may govern the activity of the translocase. The polypeptide is Protein transport protein SEC61 subunit alpha (sec-61) (Neurospora crassa (strain ATCC 24698 / 74-OR23-1A / CBS 708.71 / DSM 1257 / FGSC 987)).